An 869-amino-acid polypeptide reads, in one-letter code: Rho GTPase-activating protein 27 (869 aa).

The region spanning 6-69 is the SH3 domain; that stretch reads EGDVYVLVEH…PAQYVRELPA (64 aa). A28 is subject to Phosphotyrosine. Positions 104–134 are disordered; it reads GADGSSAEPRGRASSLCGPARQRTGGQRNSL. Residues S155, S215, and S249 each carry the phosphoserine modification. 2 disordered regions span residues 208–300 and 331–401; these read RCPP…SGES and ETEE…GWSC. Basic and acidic residues predominate over residues 209-220; it reads CPPRAESPKQVD. The span at 235-250 shows a compositional bias: low complexity; sequence RATSPRSAAAPPRLSP. The WW 1 domain occupies 246–280; that stretch reads PRLSPVWETHTDTGTGRPYYYNPDTGVTTWESPFE. Over residues 283–294 the composition is skewed to polar residues; the sequence is EGTTSPATSRAS. Residues 299–333 form the WW 2 domain; the sequence is ESLETEWGQYWDEESRRVFFYNPLTGETAWEDETE. Residues 345-356 are compositionally biased toward polar residues; it reads MQPSLSPRSPGQ. At S350 the chain carries Phosphoserine. Residues 414–447 form the WW 3 domain; sequence QFTQEQWVRLEDQHGKPYFYNPEDSSVQWELPQV. 2 disordered regions span residues 449–477 and 623–642; these read IPAP…KIKT and EEDV…GLES. A phosphoserine mark is found at S459 and S462. The residue at position 464 (T464) is a Phosphothreonine. The residue at position 469 (S469) is a Phosphoserine. Residues 477–593 enclose the PH domain; it reads TLDKAGVLHR…WHKAIAEGIS (117 aa). Phosphoserine occurs at positions 632 and 636. The region spanning 677 to 866 is the Rho-GAP domain; sequence CALAQLCERE…LILHQCADIF (190 aa).

Interacts with SH3KBP1/CIN85. As to expression, widely expressed. Highly expressed in kidney, lung, small intestine and thymus.

The protein localises to the cytoplasm. The protein resides in the membrane. Rho GTPase-activating protein which may be involved in clathrin-mediated endocytosis. GTPase activators for the Rho-type GTPases act by converting them to an inactive GDP-bound state. Has activity toward CDC42 and RAC1. The sequence is that of Rho GTPase-activating protein 27 (Arhgap27) from Mus musculus (Mouse).